We begin with the raw amino-acid sequence, 327 residues long: Serpentine receptor class gamma-2 (327 aa).

The next 6 helical transmembrane spans lie at 35-55 (LVQFVYLLPAAMLHARILYIL), 70-90 (ILFIMSCIACFTLVVQDIFFA), 157-177 (MKYAIALVILTPFLFIWNIII), 181-203 (LPVYTFGGFYIGYERVVIWATMT), 244-264 (IASFLISSCFLGTAAAESLFA), and 277-297 (FLLPISWDILNVGTPIVMVMA).

Belongs to the nematode receptor-like protein srg family.

The protein resides in the membrane. This is Serpentine receptor class gamma-2 (srg-2) from Caenorhabditis elegans.